The chain runs to 151 residues: Caveolin-3 (151 aa).

Residues 1 to 83 (MMTEEHTDLE…RLLSTLLGVP (83 aa)) are Cytoplasmic-facing. Lysine 38 is covalently cross-linked (Glycyl lysine isopeptide (Lys-Gly) (interchain with G-Cter in SUMO3)). An intramembrane region (helical) is located at residues 84–104 (LALLWGFLFACISFCHIWAVV). The Cytoplasmic portion of the chain corresponds to 105–151 (PCIKSYLIEIQCISHIYSLCIRTFCNPLFAALGQVCSNIKVVLRREG).

This sequence belongs to the caveolin family. As to quaternary structure, homooligomer. Interacts with DYSF. Interacts with DLG1 and KCNA5; forms a ternary complex. Interacts with DAG1 (via its C-terminal); the interaction prevents binding of DAG1 with DMD. Interacts with TRIM72. Interacts with MUSK; may regulate MUSK signaling. Interacts with POPDC1. Interacts with CAVIN1, CAVIN2 and CAVIN4. In terms of processing, sumoylation with SUMO3 by PIAS4 may reduce agonist-induced internalization and desensitization of adrenergic receptor ABRD2. As to expression, expressed predominantly in muscle.

It localises to the golgi apparatus membrane. The protein resides in the cell membrane. Its subcellular location is the membrane. The protein localises to the caveola. It is found in the sarcolemma. Its function is as follows. May act as a scaffolding protein within caveolar membranes. Interacts directly with G-protein alpha subunits and can functionally regulate their activity. May also regulate voltage-gated potassium channels. Plays a role in the sarcolemma repair mechanism of both skeletal muscle and cardiomyocytes that permits rapid resealing of membranes disrupted by mechanical stress. Mediates the recruitment of CAVIN2 and CAVIN3 proteins to the caveolae. This chain is Caveolin-3 (Cav3), found in Rattus norvegicus (Rat).